Here is a 660-residue protein sequence, read N- to C-terminus: DNA mismatch repair protein MutL (660 aa).

The protein belongs to the DNA mismatch repair MutL/HexB family.

Its function is as follows. This protein is involved in the repair of mismatches in DNA. It is required for dam-dependent methyl-directed DNA mismatch repair. May act as a 'molecular matchmaker', a protein that promotes the formation of a stable complex between two or more DNA-binding proteins in an ATP-dependent manner without itself being part of a final effector complex. The chain is DNA mismatch repair protein MutL from Solibacter usitatus (strain Ellin6076).